The following is a 285-amino-acid chain: Eukaryotic translation initiation factor 3 subunit F-2 (285 aa).

The region spanning Val-11–Gly-145 is the MPN domain.

The protein belongs to the eIF-3 subunit F family. In terms of assembly, component of the eukaryotic translation initiation factor 3 (eIF-3) complex. The eIF-3 complex interacts with pix.

The protein localises to the cytoplasm. Functionally, component of the eukaryotic translation initiation factor 3 (eIF-3) complex, which is involved in protein synthesis of a specialized repertoire of mRNAs and, together with other initiation factors, stimulates binding of mRNA and methionyl-tRNAi to the 40S ribosome. The eIF-3 complex specifically targets and initiates translation of a subset of mRNAs involved in cell proliferation. This is Eukaryotic translation initiation factor 3 subunit F-2 from Drosophila simulans (Fruit fly).